Reading from the N-terminus, the 147-residue chain is uncharacterized protein (147 aa).

A helical transmembrane segment spans residues 63 to 79; sequence LFIVACSAVFATIAYIN.

The protein belongs to the FUN14 family.

Its subcellular location is the membrane. This is an uncharacterized protein from Schizosaccharomyces pombe (strain 972 / ATCC 24843) (Fission yeast).